Here is a 156-residue protein sequence, read N- to C-terminus: Methylated-DNA--protein-cysteine methyltransferase (156 aa).

The Nucleophile; methyl group acceptor role is filled by cysteine 120.

Belongs to the MGMT family.

It is found in the cytoplasm. It carries out the reaction a 6-O-methyl-2'-deoxyguanosine in DNA + L-cysteinyl-[protein] = S-methyl-L-cysteinyl-[protein] + a 2'-deoxyguanosine in DNA. It catalyses the reaction a 4-O-methyl-thymidine in DNA + L-cysteinyl-[protein] = a thymidine in DNA + S-methyl-L-cysteinyl-[protein]. Functionally, involved in the cellular defense against the biological effects of O6-methylguanine (O6-MeG) and O4-methylthymine (O4-MeT) in DNA. Repairs the methylated nucleobase in DNA by stoichiometrically transferring the methyl group to a cysteine residue in the enzyme. This is a suicide reaction: the enzyme is irreversibly inactivated. This Sulfurisphaera tokodaii (strain DSM 16993 / JCM 10545 / NBRC 100140 / 7) (Sulfolobus tokodaii) protein is Methylated-DNA--protein-cysteine methyltransferase.